The sequence spans 725 residues: Beta-adducin (725 aa).

The tract at residues 1-22 (MSEDTVPEAASPPPSQGQHYFD) is disordered. Phosphoserine occurs at positions 11 and 25. Residue Thr55 is modified to Phosphothreonine. Phosphoserine is present on residues Ser60 and Ser344. Positions 425-444 (KQQKEKTRWLNTPNTYLRVN) are interaction with calmodulin. The disordered stretch occupies residues 525–725 (AEKSRSPSTE…KSKKKEKVES (201 aa)). A phosphoserine mark is found at Ser530 and Ser532. Thr533 carries the phosphothreonine modification. Phosphoserine is present on Ser535. The residue at position 561 (Thr561) is a Phosphothreonine. The segment covering 566–588 (EEYKKEVERKKLEQEQEGEKDAA) has biased composition (basic and acidic residues). A phosphoserine mark is found at Ser594, Ser598, Ser602, and Ser606. Polar residues predominate over residues 596–621 (VKSTPASPVQSPTRAGTKSPAVSPSK). Thr612 is modified (phosphothreonine). Ser614, Ser618, and Ser620 each carry phosphoserine. 2 stretches are compositionally biased toward basic and acidic residues: residues 622–631 (ASEDAKKTEV) and 639–654 (EPEK…KEEE). Position 674 is a phosphothreonine (Thr674). Ser678, Ser685, Ser688, Ser692, Ser696, Ser698, Ser700, Ser702, and Ser712 each carry phosphoserine. A compositionally biased stretch (low complexity) spans 687 to 700 (TSGPLSPEGSPSKS). The segment covering 701 to 725 (PSKKKKKFRTPSFLKKSKKKEKVES) has biased composition (basic residues). The interval 703 to 720 (KKKKKFRTPSFLKKSKKK) is interaction with calmodulin.

The protein belongs to the aldolase class II family. Adducin subfamily. As to quaternary structure, heterodimer of an alpha and a beta subunit. Found in a complex with ADD2, DMTN and SLC2A1. Interacts with SLC2A1. In terms of tissue distribution, found in liver, kidney, spleen, heart and brain.

It is found in the cytoplasm. Its subcellular location is the cytoskeleton. It localises to the cell membrane. Its function is as follows. Membrane-cytoskeleton-associated protein that promotes the assembly of the spectrin-actin network. Binds to the erythrocyte membrane receptor SLC2A1/GLUT1 and may therefore provide a link between the spectrin cytoskeleton to the plasma membrane. Binds to calmodulin. Calmodulin binds preferentially to the beta subunit. This chain is Beta-adducin (Add2), found in Rattus norvegicus (Rat).